Consider the following 102-residue polypeptide: Small ribosomal subunit protein uS10 (102 aa).

A disordered region spans residues 33–59 (RMSGPIPLPTKRIRITTRKSPDGEGSA).

Belongs to the universal ribosomal protein uS10 family. In terms of assembly, part of the 30S ribosomal subunit.

Involved in the binding of tRNA to the ribosomes. The sequence is that of Small ribosomal subunit protein uS10 from Pyrococcus furiosus (strain ATCC 43587 / DSM 3638 / JCM 8422 / Vc1).